The sequence spans 325 residues: Aminotransferase tasG (325 aa).

Gly-35 is a substrate binding site. Residues 89-90 (TW), Asn-143, Tyr-174, and 203-205 (SFA) contribute to the pyridoxal 5'-phosphate site. Asn-143 provides a ligand contact to substrate. Residue Lys-206 is modified to N6-(pyridoxal phosphate)lysine. Residue Arg-214 participates in pyridoxal 5'-phosphate binding.

Belongs to the class-I pyridoxal-phosphate-dependent aminotransferase family. As to quaternary structure, homodimer. Requires pyridoxal 5'-phosphate as cofactor.

It functions in the pathway secondary metabolite biosynthesis. Functionally, aminotransferase; part of the gene cluster that mediates the biosynthesis of the tetramic acids Sch210971 and Sch210972, potential anti-HIV fungal natural product that contain a decalin core. The PKS module of tasS together with the enoylreductase tasC catalyze the formation of the polyketide unit which is then conjugated to 4-hydroxyl-4-methyl glutamate (HMG) by the condensation domain of the tasS NRPS module. One unique structural feature of Sch210971 and Sch210972 is the tetramic acid motif proposed to be derived from the non-proteinogenic amino acid HMG, by a Dieckmann-type condensation catalyzed by the reductase domain of tasS. The aldolase tasA catalyzes the aldol condensation of 2 molecules of pyruvic acid to yield the intermediate 4-hydroxyl-4-methyl-2-oxoglutarate (HMOG), which can then be stereoselectively transaminated, may be by tasG, to form HMG. The Diels-Alderase tas3 then uses the Dieckmann product of tasS as substrate and catalyzes the Diels-Alder cycloaddition to form the decalin ring of Sch210971 and Sch210972. The polypeptide is Aminotransferase tasG (Hapsidospora irregularis).